The sequence spans 264 residues: Transformer-2 sex-determining protein (264 aa).

The tract at residues 1 to 96 (MDREPLSSGR…HKSREHPQAS (96 aa)) is disordered. The span at 13 to 22 (CSARYKHKRS) shows a compositional bias: basic residues. Low complexity predominate over residues 23–33 (ASSSSAGTTSS). Ser-40 carries the post-translational modification Phosphoserine. A compositionally biased stretch (basic residues) spans 47-61 (SRRHQRSSSRRRSRS). Positions 71-85 (EPRHRSGRSSRDRER) are enriched in basic and acidic residues. One can recognise an RRM domain in the interval 97–175 (RCIGVFGLNT…RRIRVDFSIT (79 aa)). The interval 176–196 (QRAHTPTPGVYLGRQPRGKAP) is linker. The interval 179–264 (HTPTPGVYLG…PQLRRTSSRY (86 aa)) is disordered. At Thr-180 the chain carries Phosphothreonine. Residues 191-206 (PRGKAPRSFSPRRGRR) show a composition bias toward basic residues. A compositionally biased stretch (basic and acidic residues) spans 207 to 234 (VYHDRSASPYDNYRDRYDYRNDRYDRNL). Phosphoserine occurs at positions 212 and 214. Residues 235 to 250 (RRSPSRNRYTRNRSYS) are compositionally biased toward basic residues. Ser-254 is subject to Phosphoserine.

Belongs to the splicing factor SR family. Extensively phosphorylated on serine residues in the RS domain. Isoform Tmaj and isoform Tmin are expressed in males and females. Isoform msTmaj and isoform msTmin are present only in male germ cells.

Required for female sex determination in somatic cells and for spermatogenesis in male germ cells. Positive regulator of female-specific splicing and/or polyadenylation of doublesex (dsx) pre-mRNA. Splicing requires an enhancer complex, dsxRE (dsx repeat element: which contains six copies of a 13-nucleotide repeat and a purine-rich enhancer (PRE)). DsxRE is formed through cooperative interactions between tra, tra2 and the sr proteins, and these interactions require both the repeat sequences and PRE. PRE is required for specific binding of tra2 to the dsxRE. Protein-RNA and protein-protein interactions are involved in tra-2 dependent activation and repression of alternative splicing. Together with tra-2, plays a role in switching fru splicing from the male-specific pattern to the female-specific pattern through activation of the female-specific fru 5'-splice site. The sequence is that of Transformer-2 sex-determining protein (tra2) from Drosophila melanogaster (Fruit fly).